The following is a 578-amino-acid chain: CTP synthase 2 (578 aa).

Residues 300-553 (SIALVGKYTK…MLAASGKLNT (254 aa)) form the Glutamine amidotransferase type-1 domain. Residues Cys-399, His-526, and Glu-528 each act as for GATase activity in the active site.

The protein belongs to the CTP synthase family.

The enzyme catalyses UTP + L-glutamine + ATP + H2O = CTP + L-glutamate + ADP + phosphate + 2 H(+). It participates in pyrimidine metabolism; CTP biosynthesis via de novo pathway; CTP from UDP: step 2/2. Catalyzes the ATP-dependent amination of UTP to CTP with either L-glutamine or ammonia as the source of nitrogen. Constitutes the rate-limiting enzyme in the synthesis of cytosine nucleotides. The protein is CTP synthase 2 (ctps2) of Xenopus laevis (African clawed frog).